Reading from the N-terminus, the 226-residue chain is Enolase-phosphatase E1 (226 aa).

Belongs to the HAD-like hydrolase superfamily. MasA/MtnC family. Monomer. Mg(2+) serves as cofactor.

The catalysed reaction is 5-methylsulfanyl-2,3-dioxopentyl phosphate + H2O = 1,2-dihydroxy-5-(methylsulfanyl)pent-1-en-3-one + phosphate. It participates in amino-acid biosynthesis; L-methionine biosynthesis via salvage pathway; L-methionine from S-methyl-5-thio-alpha-D-ribose 1-phosphate: step 3/6. It functions in the pathway amino-acid biosynthesis; L-methionine biosynthesis via salvage pathway; L-methionine from S-methyl-5-thio-alpha-D-ribose 1-phosphate: step 4/6. Its function is as follows. Bifunctional enzyme that catalyzes the enolization of 2,3-diketo-5-methylthiopentyl-1-phosphate (DK-MTP-1-P) into the intermediate 2-hydroxy-3-keto-5-methylthiopentenyl-1-phosphate (HK-MTPenyl-1-P), which is then dephosphorylated to form the acireductone 1,2-dihydroxy-3-keto-5-methylthiopentene (DHK-MTPene). This is Enolase-phosphatase E1 from Shewanella amazonensis (strain ATCC BAA-1098 / SB2B).